The sequence spans 332 residues: MPNEVYDVTIIGGGPIGLFSAFYSGLRSMKTKIIDAEPAVGGKVRYFFPEKIIRDIGGIPAITGENLVANLKQQAETFHPTIVCSERVVDVTKLADGTFQLTSHNGSIHFSKTIVIATGSGTFEVNKLEALHAEDFPFAIHYDVKNIEQFRDKVVVVSGGGNSAIDWAQTLEPIAKKVHLIYRGEDFKAHEESVRELKNSRVEIHIHHEISELIGTNNQLTEITVCCNQTQTTKTIETEALFINHGVKVDLGTMAEWGFKQADFGIVVDDEMKTTVPGIFACGDSATYPRKIRIIAAGLHEGPIAINSAKKYLEPTAADEAMISTHHESFIG.

7 residues coordinate FAD: Asp-35, Lys-43, Phe-48, Val-88, Phe-123, Asp-284, and Thr-325.

It belongs to the ferredoxin--NADP reductase type 2 family. In terms of assembly, homodimer. Requires FAD as cofactor.

The catalysed reaction is 2 reduced [2Fe-2S]-[ferredoxin] + NADP(+) + H(+) = 2 oxidized [2Fe-2S]-[ferredoxin] + NADPH. The protein is Ferredoxin--NADP reductase 1 of Listeria monocytogenes serovar 1/2a (strain ATCC BAA-679 / EGD-e).